The primary structure comprises 1503 residues: E3 ubiquitin-protein ligase listerin (1503 aa).

HEAT repeat units follow at residues 52–89 (SGIDDETRIVMRKLTKKDCQTREKGLRELTNIIAETSS), 93–129 (CYEHFCGLVPQLSTDGSPTVRLLTMKTITLFLVKLEK), 133–170 (KGLKKIIPMVLFARCDVTNGVAAAAGAVIRDGFEADKK), 280–318 (LNTPSIVTYIQNHLDSQTFTPECSTAWEGMIILLPSAQF), 323–345 (SLQNGIYPRFLNVIRKKGNHWRV), 346–384 (LQHFLLPAVVLLLKEMGSLENNMKVLGTIMESFTDNLPW), 552–589 (GDIVRLIKLLLENQEIKSLNISVKNDHVGRRLLLTGGS), 640–663 (AENVEFLITLLRKMKSTDVSNEAE), 664–700 (KNVLILKLFTAIFESDEDAKSEHYNCLSEHLTSDFNS), 845–882 (LEKRYSLVALTEELQRSRREIEERLIRSDEVRFKLDDS), 1022–1065 (TLFI…RMFR), 1078–1117 (RTLLKAMFTLVEFPTNVPNDSVVTREFVPELSVFKYSLLE), 1141–1183 (AAAK…VMIS), and 1302–1340 (FKSITLLPAAVRLFHKNIPNNFKPIFQEVVTKHASKLLI). The segment at 1446-1499 (CTICMMTVHQQTNQLPKVKCKQCKNRFHSNCLVSSFHTYKWFESSNQSTCPLCR) adopts an RING-type zinc-finger fold.

It belongs to the LTN1 family. As to quaternary structure, component of the ribosome quality control complex (RQC), composed of at least the E3 ubiquitin ligase ltn1 and nemf. The complex probably also contains tcf25 as well as vcp/p97 and its ubiquitin-binding cofactors. RQC forms a stable complex with 60S ribosomal subunits.

It is found in the cytoplasm. The protein resides in the cytosol. It catalyses the reaction S-ubiquitinyl-[E2 ubiquitin-conjugating enzyme]-L-cysteine + [acceptor protein]-L-lysine = [E2 ubiquitin-conjugating enzyme]-L-cysteine + N(6)-ubiquitinyl-[acceptor protein]-L-lysine.. It functions in the pathway protein modification; protein ubiquitination. E3 ubiquitin-protein ligase. Component of the ribosome quality control complex (RQC), a ribosome-associated complex that mediates ubiquitination and extraction of incompletely synthesized nascent chains for proteasomal degradation. Ubiquitination leads to vcp/p97 recruitment for extraction and degradation of the incomplete translation product. In Caenorhabditis briggsae, this protein is E3 ubiquitin-protein ligase listerin.